The sequence spans 237 residues: Mitochondrial inner membrane protease atp23 (237 aa).

The span at 1 to 19 shows a compositional bias: low complexity; sequence MSDSQPGSTSSTGGKSDSG. The segment at 1–23 is disordered; the sequence is MSDSQPGSTSSTGGKSDSGYIPG. An a divalent metal cation-binding site is contributed by His136. Glu137 is a catalytic residue. Position 140 (His140) interacts with a divalent metal cation.

It belongs to the peptidase M76 family.

It localises to the mitochondrion inner membrane. Its function is as follows. Has a dual role in the assembly of mitochondrial ATPase. Acts as a protease that removes N-terminal residues of mitochondrial ATPase CF(0) subunit 6 at the intermembrane space side. Also involved in the correct assembly of the membrane-embedded ATPase CF(0) particle, probably mediating association of subunit 6 with the subunit 9 ring. The chain is Mitochondrial inner membrane protease atp23 (atp23) from Neosartorya fischeri (strain ATCC 1020 / DSM 3700 / CBS 544.65 / FGSC A1164 / JCM 1740 / NRRL 181 / WB 181) (Aspergillus fischerianus).